The sequence spans 222 residues: ATP synthase F(0) complex subunit a (222 aa).

A run of 6 helical transmembrane segments spans residues 7 to 27, 64 to 84, 93 to 113, 132 to 152, 160 to 180, and 185 to 205; these read AFFD…AILL, WSLM…LGLL, QLTV…ILGF, FLIP…PVTL, ITAG…LLSI, and ITVT…VALI.

This sequence belongs to the ATPase A chain family. Component of the ATP synthase complex composed at least of ATP5F1A/subunit alpha, ATP5F1B/subunit beta, ATP5MC1/subunit c (homooctomer), MT-ATP6/subunit a, MT-ATP8/subunit 8, ATP5ME/subunit e, ATP5MF/subunit f, ATP5MG/subunit g, ATP5MK/subunit k, ATP5MJ/subunit j, ATP5F1C/subunit gamma, ATP5F1D/subunit delta, ATP5F1E/subunit epsilon, ATP5PF/subunit F6, ATP5PB/subunit b, ATP5PD/subunit d, ATP5PO/subunit OSCP. ATP synthase complex consists of a soluble F(1) head domain (subunits alpha(3) and beta(3)) - the catalytic core - and a membrane F(0) domain - the membrane proton channel (subunits c, a, 8, e, f, g, k and j). These two domains are linked by a central stalk (subunits gamma, delta, and epsilon) rotating inside the F1 region and a stationary peripheral stalk (subunits F6, b, d, and OSCP). Interacts with DNAJC30; interaction is direct.

It localises to the mitochondrion inner membrane. It carries out the reaction H(+)(in) = H(+)(out). Its function is as follows. Subunit a, of the mitochondrial membrane ATP synthase complex (F(1)F(0) ATP synthase or Complex V) that produces ATP from ADP in the presence of a proton gradient across the membrane which is generated by electron transport complexes of the respiratory chain. ATP synthase complex consist of a soluble F(1) head domain - the catalytic core - and a membrane F(1) domain - the membrane proton channel. These two domains are linked by a central stalk rotating inside the F(1) region and a stationary peripheral stalk. During catalysis, ATP synthesis in the catalytic domain of F(1) is coupled via a rotary mechanism of the central stalk subunits to proton translocation. With the subunit c (ATP5MC1), forms the proton-conducting channel in the F(0) domain, that contains two crucial half-channels (inlet and outlet) that facilitate proton movement from the mitochondrial intermembrane space (IMS) into the matrix. Protons are taken up via the inlet half-channel and released through the outlet half-channel, following a Grotthuss mechanism. This is ATP synthase F(0) complex subunit a from Mammuthus primigenius (Siberian woolly mammoth).